A 318-amino-acid polypeptide reads, in one-letter code: Methionyl-tRNA formyltransferase (318 aa).

112–115 contacts (6S)-5,6,7,8-tetrahydrofolate; it reads SLLP.

This sequence belongs to the Fmt family.

The enzyme catalyses L-methionyl-tRNA(fMet) + (6R)-10-formyltetrahydrofolate = N-formyl-L-methionyl-tRNA(fMet) + (6S)-5,6,7,8-tetrahydrofolate + H(+). Its function is as follows. Attaches a formyl group to the free amino group of methionyl-tRNA(fMet). The formyl group appears to play a dual role in the initiator identity of N-formylmethionyl-tRNA by promoting its recognition by IF2 and preventing the misappropriation of this tRNA by the elongation apparatus. The protein is Methionyl-tRNA formyltransferase of Mycobacterium leprae (strain Br4923).